The chain runs to 264 residues: Mediator of RNA polymerase II transcription subunit 4 (264 aa).

The disordered stretch occupies residues 183 to 264; that stretch reads LTKLPGQEDG…DLDLFNPDEF (82 aa). Over residues 200-225 the composition is skewed to basic and acidic residues; that stretch reads NEDKNIVKDAEGAEGEIRQDDKKEDD. Over residues 236 to 264 the composition is skewed to acidic residues; it reads AEGDEDKNAGEDEDEAMDSDLDLFNPDEF.

Belongs to the Mediator complex subunit 4 family. As to quaternary structure, component of the Mediator complex.

It localises to the nucleus. Functionally, component of the Mediator complex, a coactivator involved in the regulated transcription of nearly all RNA polymerase II-dependent genes. Mediator functions as a bridge to convey information from gene-specific regulatory proteins to the basal RNA polymerase II transcription machinery. Mediator is recruited to promoters by direct interactions with regulatory proteins and serves as a scaffold for the assembly of a functional preinitiation complex with RNA polymerase II and the general transcription factors. The sequence is that of Mediator of RNA polymerase II transcription subunit 4 (MED4) from Candida glabrata (strain ATCC 2001 / BCRC 20586 / JCM 3761 / NBRC 0622 / NRRL Y-65 / CBS 138) (Yeast).